The sequence spans 252 residues: Glucosamine-6-phosphate deaminase (252 aa).

Aspartate 67 serves as the catalytic Proton acceptor; for enolization step. The active-site For ring-opening step is the asparagine 137. Catalysis depends on histidine 139, which acts as the Proton acceptor; for ring-opening step. Glutamate 144 serves as the catalytic For ring-opening step.

Belongs to the glucosamine/galactosamine-6-phosphate isomerase family. NagB subfamily.

It catalyses the reaction alpha-D-glucosamine 6-phosphate + H2O = beta-D-fructose 6-phosphate + NH4(+). It participates in amino-sugar metabolism; N-acetylneuraminate degradation; D-fructose 6-phosphate from N-acetylneuraminate: step 5/5. Its function is as follows. Catalyzes the reversible isomerization-deamination of glucosamine 6-phosphate (GlcN6P) to form fructose 6-phosphate (Fru6P) and ammonium ion. The sequence is that of Glucosamine-6-phosphate deaminase from Staphylococcus aureus (strain Mu3 / ATCC 700698).